Here is a 230-residue protein sequence, read N- to C-terminus: 7-cyano-7-deazaguanine synthase (230 aa).

8 to 18 (LSGGMDSAVVT) contributes to the ATP binding site. 4 residues coordinate Zn(2+): Cys186, Cys196, Cys199, and Cys202.

The protein belongs to the QueC family. Zn(2+) is required as a cofactor.

The catalysed reaction is 7-carboxy-7-deazaguanine + NH4(+) + ATP = 7-cyano-7-deazaguanine + ADP + phosphate + H2O + H(+). The protein operates within purine metabolism; 7-cyano-7-deazaguanine biosynthesis. In terms of biological role, catalyzes the ATP-dependent conversion of 7-carboxy-7-deazaguanine (CDG) to 7-cyano-7-deazaguanine (preQ(0)). This Xylella fastidiosa (strain 9a5c) protein is 7-cyano-7-deazaguanine synthase.